The following is a 284-amino-acid chain: Acetylglutamate kinase (284 aa).

Residues 66-67 (GG), Arg88, and Asn179 contribute to the substrate site.

Belongs to the acetylglutamate kinase family. ArgB subfamily.

The protein localises to the cytoplasm. The catalysed reaction is N-acetyl-L-glutamate + ATP = N-acetyl-L-glutamyl 5-phosphate + ADP. The protein operates within amino-acid biosynthesis; L-arginine biosynthesis; N(2)-acetyl-L-ornithine from L-glutamate: step 2/4. In terms of biological role, catalyzes the ATP-dependent phosphorylation of N-acetyl-L-glutamate. The polypeptide is Acetylglutamate kinase (Actinobacillus pleuropneumoniae serotype 3 (strain JL03)).